Reading from the N-terminus, the 121-residue chain is uncharacterized protein (121 aa).

The CHCH domain maps to 43–86 (LKECSSHVAAFADCSKDKYISVVWECRELQQLMKNCLVEYTTSE). 2 short sequence motifs (cx9C motif) span residues 46-56 (CSSHVAAFADC) and 68-78 (CRELQQLMKNC). 2 disulfides stabilise this stretch: C46–C78 and C56–C68.

Belongs to the CMC family.

This is an uncharacterized protein from Dictyostelium discoideum (Social amoeba).